The chain runs to 120 residues: Large ribosomal subunit protein uL22 (120 aa).

The segment at 1–25 (MFVNKKYTAKGKNLPSSPKKVRPIA) is disordered.

This sequence belongs to the universal ribosomal protein uL22 family. As to quaternary structure, part of the 50S ribosomal subunit.

Functionally, this protein binds specifically to 23S rRNA; its binding is stimulated by other ribosomal proteins, e.g. L4, L17, and L20. It is important during the early stages of 50S assembly. It makes multiple contacts with different domains of the 23S rRNA in the assembled 50S subunit and ribosome. The globular domain of the protein is located near the polypeptide exit tunnel on the outside of the subunit, while an extended beta-hairpin is found that lines the wall of the exit tunnel in the center of the 70S ribosome. The protein is Large ribosomal subunit protein uL22 of Borrelia recurrentis (strain A1).